Consider the following 480-residue polypeptide: Histone deacetylase 1 (480 aa).

A histone deacetylase region spans residues 9-321 (RKVCYYYDGD…WTYETAVALD (313 aa)). 1D-myo-inositol 1,4,5,6-tetrakisphosphate is bound by residues Gly27 and Lys31. His141 is an active-site residue. Asp176, His178, and Asp264 together coordinate Zn(2+). Residue Arg270 coordinates 1D-myo-inositol 1,4,5,6-tetrakisphosphate. Residues 376 to 480 (APGVQMQPIP…KGVKEETKST (105 aa)) are disordered. Over residues 388–400 (AVQEDSGDEEEED) the composition is skewed to acidic residues. Positions 401 to 416 (PEKRISIRNSDKRISC) are enriched in basic and acidic residues. Positions 417 to 427 (DEEFSDSEDEG) are enriched in acidic residues. The span at 455–480 (KDEKEEEKAKEEKAEPKGVKEETKST) shows a compositional bias: basic and acidic residues.

The protein belongs to the histone deacetylase family. HD type 1 subfamily. Zn(2+) is required as a cofactor.

It localises to the nucleus. The enzyme catalyses N(6)-acetyl-L-lysyl-[histone] + H2O = L-lysyl-[histone] + acetate. It catalyses the reaction N(6)-acetyl-L-lysyl-[protein] + H2O = L-lysyl-[protein] + acetate. It carries out the reaction N(6)-(2E)-butenoyl-L-lysyl-[protein] + H2O = (2E)-2-butenoate + L-lysyl-[protein]. The catalysed reaction is N(6)-[(S)-lactoyl]-L-lysyl-[protein] + H2O = (S)-lactate + L-lysyl-[protein]. Inositol tetraphosphate (1D-myo-inositol 1,4,5,6-tetrakisphosphate) may act as an intermolecular glue between HDAC1 and N-Cor repressor complex components. Functionally, histone deacetylase that catalyzes the deacetylation of lysine residues on the N-terminal part of the core histones (H2A, H2B, H3 and H4). Histone deacetylation gives a tag for epigenetic repression and plays an important role in transcriptional regulation, cell cycle progression and developmental events. Histone deacetylases act via the formation of large multiprotein complexes. Also functions as a deacetylase for non-histone proteins. In addition to protein deacetylase activity, also has protein-lysine deacylase activity: acts as a protein decrotonylase and delactylase by mediating decrotonylation ((2E)-butenoyl) and delactylation (lactoyl) of histones, respectively. The sequence is that of Histone deacetylase 1 (HDAC1) from Gallus gallus (Chicken).